A 450-amino-acid polypeptide reads, in one-letter code: Tubulin alpha-5 chain (450 aa).

Residues glutamine 11, glutamate 71, glycine 144, threonine 145, threonine 179, asparagine 206, and asparagine 228 each coordinate GTP. Glutamate 71 is a Mg(2+) binding site. The active site involves glutamate 254. Threonine 349 is subject to Phosphothreonine. The tract at residues 429-450 (EKDYEEVGAEGGDDEEDEGEDY) is disordered. A compositionally biased stretch (acidic residues) spans 431–450 (DYEEVGAEGGDDEEDEGEDY).

The protein belongs to the tubulin family. Dimer of alpha and beta chains. A typical microtubule is a hollow water-filled tube with an outer diameter of 25 nm and an inner diameter of 15 nM. Alpha-beta heterodimers associate head-to-tail to form protofilaments running lengthwise along the microtubule wall with the beta-tubulin subunit facing the microtubule plus end conferring a structural polarity. Microtubules usually have 13 protofilaments but different protofilament numbers can be found in some organisms and specialized cells. Mg(2+) is required as a cofactor. In terms of processing, undergoes a tyrosination/detyrosination cycle, the cyclic removal and re-addition of a C-terminal tyrosine residue by the enzymes tubulin tyrosine carboxypeptidase (TTCP) and tubulin tyrosine ligase (TTL), respectively.

The protein resides in the cytoplasm. Its subcellular location is the cytoskeleton. The catalysed reaction is GTP + H2O = GDP + phosphate + H(+). Tubulin is the major constituent of microtubules, a cylinder consisting of laterally associated linear protofilaments composed of alpha- and beta-tubulin heterodimers. Microtubules grow by the addition of GTP-tubulin dimers to the microtubule end, where a stabilizing cap forms. Below the cap, tubulin dimers are in GDP-bound state, owing to GTPase activity of alpha-tubulin. This chain is Tubulin alpha-5 chain (TUBA5), found in Arabidopsis thaliana (Mouse-ear cress).